We begin with the raw amino-acid sequence, 570 residues long: Phytoene desaturase (570 aa).

A helical membrane pass occupies residues 547–567 (LFQGFLGALVAILLAYYYLVI).

The protein belongs to the carotenoid/retinoid oxidoreductase family. NAD(+) is required as a cofactor.

The protein resides in the membrane. The catalysed reaction is 15-cis-phytoene + A = all-trans-phytofluene + AH2. The enzyme catalyses all-trans-phytofluene + A = all-trans-zeta-carotene + AH2. It catalyses the reaction all-trans-zeta-carotene + A = all-trans-neurosporene + AH2. It carries out the reaction all-trans-neurosporene + A = all-trans-lycopene + AH2. Its pathway is carotenoid biosynthesis. In terms of biological role, phytoene desaturase; part of the car gene cluster that mediates the biosynthesis of neurosporaxanthin, a carboxylic apocarotenoid acting as an essential protective pigments and leading to orange pigmentation. Converts phytoene into lycopene via the intermediates phytofluene, zeta-carotene and neurosporene; and further desaturates gamma-carotene into torulene. Neurosporaxanthin is synthesized from geranyl-geranyl pyrophosphate (GGPP) through several enzymatic activities. Phytoene synthase activity performed by the bifunctional enzyme carAR first produces phytoene from geranyl-geranyl pyrophosphate (GGPP). The phytoene dehydrogenase carB then introduces 4 desaturations to lead to lycopene which is substrate of the carotene cyclase activity of carAR that leads to the production of gamma-carotene. CarB then performs a 5th desaturation reaction to yield torulene. Torulene is the substrate of the dioxidase carT that breaks the molecule, removing five carbon atoms to yield beta-apo-4'-carotenal, whereas the aldehyde dehydrogenase carD mediates the last step by converting beta-apo-4'-carotenal into neurosporaxanthin. The polypeptide is Phytoene desaturase (Fusarium fujikuroi (Bakanae and foot rot disease fungus)).